A 210-amino-acid polypeptide reads, in one-letter code: uncharacterized protein (210 aa).

This is an uncharacterized protein from Nostoc sp. (strain PCC 7120 / SAG 25.82 / UTEX 2576).